The primary structure comprises 290 residues: MNKVGMFYTYWSTEWMVDFPATAKRIAGLGFDLMEISLGEFHNLSDAKKRELKAVADDLGLTVMCCIGLKSEYDFASPDKSVRDAGTEYVKRLLDDCHLLGAPVFAGLTFCAWPQSPPLDMKDKRPYVDRAIESVRRVIKVAEDYGIIYALEVVNRFEQWLCNDAKEAIAFADAVDSPACKVQLDTFHMNIEETSFRDAILACKGKMGHFHLGEANRLPPGEGRLPWDEIFGALKEIGYDGTIVMEPFMRKGGSVSRAVGVWRDMSNGATDEEMDERARRSLQFVRDKLA.

C66 lines the substrate pocket. E152 serves as the catalytic Proton donor/acceptor. Residue E152 participates in Mn(2+) binding. Substrate-binding positions include E158 and 185 to 188 (DTFH). Residues D185 and H211 each contribute to the Mn(2+) site. Substrate is bound at residue R217. The active-site Proton donor/acceptor is E246. E246 is a Mn(2+) binding site.

Belongs to the hyi family. Homodimer. It depends on Mn(2+) as a cofactor.

The catalysed reaction is keto-D-tagatose = keto-D-sorbose. It catalyses the reaction D-allulose = keto-D-fructose. The enzyme catalyses D-ribulose = D-xylulose. With respect to regulation, strongly inhibited (about 90% of the enzyme activity) by Ag(+), Hg(2+) and p-chloromercuribenzoic acid. Cu(2+) and Zn(2+) inhibit about 60% of the enzyme activity. Its function is as follows. Catalyzes the epimerization of various ketoses at the C(3) position. It is able to interconvert D-tagatose and D-ribulose to D-sorbose and D-xylulose, respectively. The enzyme is also able to accept other ketopentoses such as D-psicose with lower efficiency. The sequence is that of D-tagatose 3-epimerase from Pseudomonas cichorii.